The following is a 303-amino-acid chain: Acetylglutamate kinase (303 aa).

Residues 76–77 (GG), Arg98, and Asn192 contribute to the substrate site.

It belongs to the acetylglutamate kinase family. ArgB subfamily.

Its subcellular location is the cytoplasm. It carries out the reaction N-acetyl-L-glutamate + ATP = N-acetyl-L-glutamyl 5-phosphate + ADP. The protein operates within amino-acid biosynthesis; L-arginine biosynthesis; N(2)-acetyl-L-ornithine from L-glutamate: step 2/4. Its function is as follows. Catalyzes the ATP-dependent phosphorylation of N-acetyl-L-glutamate. The sequence is that of Acetylglutamate kinase from Chlorobium phaeobacteroides (strain DSM 266 / SMG 266 / 2430).